The sequence spans 726 residues: MSEETVPEAASPPPPQGQPYFDRFSEDDPEYMRLRNRAADLRQDFNLMEQKKRVTMILQSPSFREELEGLIQEQMKKGNNSSNIWALRQIADFMASTSHAVFPTSSMNVSMMTPINDLHTADSLNLAKGERLMRCKISSVYRLLDLYGWAQLSDTYVTLRVSKEQDHFLISPKGVSCSEVTASSLIKVNILGEVVEKGSSCFPVDTTGFCLHSAIYAARPDVRCIIHLHTPATAAVSAMKWGLLPVSHNALLVGDMAYYDFNGEMEQEADRINLQKCLGPTCKILVLRNHGVVALGDTVEEAFYKIFHLQAACEIQVSALSSAGGVENLILLEQEKHRPHEVGSVQWAGSTFGPMQKSRLGEHEFEALMRMLDNLGYRTGYTYRHPFVQEKTKHKSEVEIPATVTAFVFEEDGAPVPALRQHAQKQQKEKTRWLNTPNTYLRVNVADEVQRSMGSPRPKTTWMKADEVEKSSSGMPIRIENPNQFVPLYTDPQEVLEMRNKIREQNRQDVKSAGPQSQLLASVIAEKSRSPSTESQLMSKGDEDTKDDSEETVPNPFSQLTDQELEEYKKEVERKKLELDGEKETAPEEPGSPAKSAPASPVQSPAKEAETKSPLVSPSKSLEEGTKKTETSKAATTEPETTQPEGVVVNGREEEQTAEEILSKGLSQMTTSADTDVDTSKDKTESVTSGPMSPEGSPSKSPSKKKKKFRTPSFLKKSKKKEKVES.

The tract at residues 1-25 (MSEETVPEAASPPPPQGQPYFDRFS) is disordered. Phosphoserine occurs at positions 11 and 25. The residue at position 55 (T55) is a Phosphothreonine; by PKA. Phosphoserine is present on residues S60 and S344. Residues 425–444 (KQQKEKTRWLNTPNTYLRVN) form an interaction with calmodulin region. Positions 525–726 (AEKSRSPSTE…KSKKKEKVES (202 aa)) are disordered. Phosphoserine is present on residues S530 and S532. T533 bears the Phosphothreonine mark. The residue at position 535 (S535) is a Phosphoserine. A compositionally biased stretch (basic and acidic residues) spans 566-586 (EEYKKEVERKKLELDGEKETA). Residues 588 to 606 (EEPGSPAKSAPASPVQSPA) are compositionally biased toward low complexity. Residues S592, S596, S600, and S604 each carry the phosphoserine modification. Position 611 is a phosphothreonine (T611). Phosphoserine is present on residues S613, S617, S619, and S621. The span at 621–631 (SLEEGTKKTET) shows a compositional bias: basic and acidic residues. A compositionally biased stretch (low complexity) spans 632-645 (SKAATTEPETTQPE). The segment covering 665-674 (GLSQMTTSAD) has biased composition (polar residues). A Phosphothreonine modification is found at T675. Phosphoserine occurs at positions 686, 689, 693, 697, 699, and 701. A compositionally biased stretch (low complexity) spans 689–701 (SGPMSPEGSPSKS). Positions 702–726 (PSKKKKKFRTPSFLKKSKKKEKVES) are enriched in basic residues. S703 bears the Phosphoserine; by PKC mark. Residues 704–721 (KKKKKFRTPSFLKKSKKK) form an interaction with calmodulin region. S713 carries the phosphoserine; by PKA and PKC modification.

This sequence belongs to the aldolase class II family. Adducin subfamily. As to quaternary structure, heterodimer of an alpha and a beta subunit. Found in a complex with ADD2, DMTN and SLC2A1. Interacts with SLC2A1. The N-terminus is blocked. As to expression, expressed mainly in brain, spleen, kidney cortex and medulla, and heart. Also expressed in human umbilical vein endothelial cells, human vascular smooth muscle cells, kidney tubular cells and K-562 cell line.

The protein localises to the cytoplasm. It is found in the cytoskeleton. Its subcellular location is the cell membrane. Its function is as follows. Membrane-cytoskeleton-associated protein that promotes the assembly of the spectrin-actin network. Binds to the erythrocyte membrane receptor SLC2A1/GLUT1 and may therefore provide a link between the spectrin cytoskeleton to the plasma membrane. Binds to calmodulin. Calmodulin binds preferentially to the beta subunit. The protein is Beta-adducin (ADD2) of Homo sapiens (Human).